The primary structure comprises 660 residues: Translation factor GUF1, mitochondrial (660 aa).

The N-terminal 42 residues, 1–42 (MRSCVRTASSVLQSWRAHTVLRNGCPLPSRTLERLPRLARSY), are a transit peptide targeting the mitochondrion. Positions 62 to 242 (ERYRNFCIVA…AVVEKIPAPV (181 aa)) constitute a tr-type G domain. GTP-binding positions include 71 to 78 (AHVDHGKS), 135 to 139 (DTPGH), and 189 to 192 (NKVD).

Belongs to the TRAFAC class translation factor GTPase superfamily. Classic translation factor GTPase family. LepA subfamily.

The protein localises to the mitochondrion inner membrane. The catalysed reaction is GTP + H2O = GDP + phosphate + H(+). Promotes mitochondrial protein synthesis. May act as a fidelity factor of the translation reaction, by catalyzing a one-codon backward translocation of tRNAs on improperly translocated ribosomes. Binds to mitochondrial ribosomes in a GTP-dependent manner. In Phaeosphaeria nodorum (strain SN15 / ATCC MYA-4574 / FGSC 10173) (Glume blotch fungus), this protein is Translation factor GUF1, mitochondrial.